We begin with the raw amino-acid sequence, 432 residues long: Serine--tRNA ligase (432 aa).

L-serine is bound at residue 238 to 240 (TAE). Position 269-271 (269-271 (RSE)) interacts with ATP. L-serine is bound at residue Glu-292. ATP is bound at residue 356–359 (EVSS). Position 392 (Ser-392) interacts with L-serine.

It belongs to the class-II aminoacyl-tRNA synthetase family. Type-1 seryl-tRNA synthetase subfamily. Homodimer. The tRNA molecule binds across the dimer.

The protein localises to the cytoplasm. The enzyme catalyses tRNA(Ser) + L-serine + ATP = L-seryl-tRNA(Ser) + AMP + diphosphate + H(+). It carries out the reaction tRNA(Sec) + L-serine + ATP = L-seryl-tRNA(Sec) + AMP + diphosphate + H(+). It participates in aminoacyl-tRNA biosynthesis; selenocysteinyl-tRNA(Sec) biosynthesis; L-seryl-tRNA(Sec) from L-serine and tRNA(Sec): step 1/1. Functionally, catalyzes the attachment of serine to tRNA(Ser). Is also able to aminoacylate tRNA(Sec) with serine, to form the misacylated tRNA L-seryl-tRNA(Sec), which will be further converted into selenocysteinyl-tRNA(Sec). This chain is Serine--tRNA ligase, found in Buchnera aphidicola subsp. Baizongia pistaciae (strain Bp).